A 264-amino-acid polypeptide reads, in one-letter code: Glutamate racemase (264 aa).

Substrate-binding positions include 10–11 (DS) and 42–43 (YG). Cys73 functions as the Proton donor/acceptor in the catalytic mechanism. 74–75 (NT) contacts substrate. Cys183 functions as the Proton donor/acceptor in the catalytic mechanism. 184 to 185 (TH) is a binding site for substrate.

This sequence belongs to the aspartate/glutamate racemases family.

It catalyses the reaction L-glutamate = D-glutamate. It participates in cell wall biogenesis; peptidoglycan biosynthesis. Provides the (R)-glutamate required for cell wall biosynthesis. This is Glutamate racemase from Streptococcus suis (strain 98HAH33).